We begin with the raw amino-acid sequence, 636 residues long: Sodium-dependent proline transporter (636 aa).

At Met1 to Asp45 the chain is on the cytoplasmic side. Thr20 bears the Phosphothreonine mark. A Phosphoserine modification is found at Ser22. Helical transmembrane passes span Phe46–Arg66, Ala74–Leu93, and Gly117–Ile137. The Extracellular portion of the chain corresponds to Ala138–Arg214. Asn182 carries an N-linked (GlcNAc...) asparagine glycan. 9 helical membrane passes run Trp215–Leu233, Val242–Val259, Ile295–Tyr312, Phe324–Leu345, Leu378–Leu397, Val425–Thr443, Ser459–Ile479, Ala500–Val519, and Leu538–Val556. The Cytoplasmic segment spans residues Ala557 to Met636. Phosphoserine occurs at positions 573 and 582. Thr588 is modified (phosphothreonine). Tyr591 is subject to Phosphotyrosine. Ser598 and Ser600 each carry phosphoserine.

This sequence belongs to the sodium:neurotransmitter symporter (SNF) (TC 2.A.22) family. SLC6A7 subfamily. In terms of tissue distribution, brain specific (at protein level). Highly expressed in hippocampus, corpus striatum and temporal cortex. Also expressed in frontal cortex, occipital cortex and, at lower levels, in cerebellum and parietal cortex (at protein level).

It is found in the synaptic cell membrane. It carries out the reaction L-proline(out) + chloride(out) + 2 Na(+)(out) = L-proline(in) + chloride(in) + 2 Na(+)(in). The catalysed reaction is L-pipecolate(out) + chloride(out) + 2 Na(+)(out) = L-pipecolate(in) + chloride(in) + 2 Na(+)(in). In terms of biological role, brain specific sodium (and chloride)-dependent proline transporter. Terminates the action of proline by its high affinity sodium-dependent reuptake into presynaptic terminals. The sequence is that of Sodium-dependent proline transporter from Homo sapiens (Human).